Here is a 158-residue protein sequence, read N- to C-terminus: S-ribosylhomocysteine lyase (158 aa).

The Fe cation site is built by His54, His58, and Cys125.

Belongs to the LuxS family. As to quaternary structure, homodimer. Requires Fe cation as cofactor.

The catalysed reaction is S-(5-deoxy-D-ribos-5-yl)-L-homocysteine = (S)-4,5-dihydroxypentane-2,3-dione + L-homocysteine. In terms of biological role, involved in the synthesis of autoinducer 2 (AI-2) which is secreted by bacteria and is used to communicate both the cell density and the metabolic potential of the environment. The regulation of gene expression in response to changes in cell density is called quorum sensing. Catalyzes the transformation of S-ribosylhomocysteine (RHC) to homocysteine (HC) and 4,5-dihydroxy-2,3-pentadione (DPD). In Lactococcus lactis subsp. cremoris (strain MG1363), this protein is S-ribosylhomocysteine lyase.